Reading from the N-terminus, the 65-residue chain is MKAKEWREKSLDEIRQKNKELEEELFNLRMRSAAGQLESSAALGKIKRDIARAKTVLREKGVKEH.

This sequence belongs to the universal ribosomal protein uL29 family.

The sequence is that of Large ribosomal subunit protein uL29 from Syntrophus aciditrophicus (strain SB).